A 360-amino-acid polypeptide reads, in one-letter code: Protein OSB4, chloroplastic (360 aa).

A chloroplast-targeting transit peptide spans 1-61 (MQFLGRSISK…AEKSSEEWPR (61 aa)). The tract at residues 28–64 (SQQFLSTSSTESSSRTRGGGGGNRAEKSSEEWPRPME) is disordered. Over residues 33–43 (STSSTESSSRT) the composition is skewed to low complexity. The segment covering 51–61 (RAEKSSEEWPR) has biased composition (basic and acidic residues). The 118-residue stretch at 71-188 (IANSIDLIGY…VMVRDLHYIE (118 aa)) folds into the SSB domain. PDF region regions lie at residues 224–276 (WFDL…SELK) and 296–344 (WKDL…EKLP).

It localises to the plastid. The protein resides in the chloroplast. In terms of biological role, binds single-stranded DNA. The polypeptide is Protein OSB4, chloroplastic (OSB4) (Arabidopsis thaliana (Mouse-ear cress)).